Here is a 1091-residue protein sequence, read N- to C-terminus: Voltage-dependent calcium channel subunit alpha-2/delta-3 (1091 aa).

Residues Met-1–Ser-33 form the signal peptide. The Extracellular portion of the chain corresponds to Glu-34–Gly-1068. N-linked (GlcNAc...) asparagine glycosylation is present at Asn-166. The region spanning Asp-256–Leu-438 is the VWFA domain. Asp-262, Ser-264, and Ser-266 together coordinate a divalent metal cation. The short motif at Asp-262–Ser-266 is the MIDAS-like motif element. Asn-309 carries an N-linked (GlcNAc...) asparagine glycan. Cys-412 and Cys-1055 are joined by a disulfide. Positions Trp-452–Arg-549 constitute a Cache domain. Residues Asn-553 and Asn-632 are each glycosylated (N-linked (GlcNAc...) asparagine). At Tyr-924 the chain carries Phosphotyrosine. Residues Gly-1069 to Phe-1089 form a helical membrane-spanning segment. Over Ser-1090–Arg-1091 the chain is Cytoplasmic.

The protein belongs to the calcium channel subunit alpha-2/delta family. Dimer formed of alpha-2-2 and delta-2 chains; disulfide-linked. Voltage-dependent calcium channels are multisubunit complexes, consisting of alpha-1 (CACNA1), alpha-2 (CACNA2D), beta (CACNB) and delta (CACNA2D) subunits in a 1:1:1:1 ratio. Post-translationally, N-glycosylated. May be proteolytically processed into subunits alpha-2-3 and delta-3 that are disulfide-linked. It is however unclear whether such cleavage really takes place in vivo and has a functional role. In terms of tissue distribution, brain-specific. Predominantly expressed in the caudate putamen, entorhinal complex, hippocampus and cortex.

It is found in the membrane. Its function is as follows. The alpha-2/delta subunit of voltage-dependent calcium channels regulates calcium current density and activation/inactivation kinetics of the calcium channel. Acts as a regulatory subunit for P/Q-type calcium channel (CACNA1A), N-type (CACNA1B), L-type (CACNA1C OR CACNA1D) but not T-type (CACNA1G). In Mus musculus (Mouse), this protein is Voltage-dependent calcium channel subunit alpha-2/delta-3 (Cacna2d3).